Consider the following 473-residue polypeptide: Photosystem II CP43 reaction center protein (473 aa).

Residues 1–14 constitute a propeptide that is removed on maturation; it reads MKTLYSLRRFYHVE. Threonine 15 carries the post-translational modification N-acetylthreonine. The residue at position 15 (threonine 15) is a Phosphothreonine. 5 helical membrane-spanning segments follow: residues 69 to 93, 134 to 155, 178 to 200, 255 to 275, and 291 to 312; these read LFEVAHFVPEKPMYEQGLILLPHLA, LLGPETLEESFPFFGYVWKDRN, KALYFGGVYDTWAPGGGDVRKIT, KPFAWARRALVWSGEAYLSYS, and WFNNTAYPSEFYGPTGPEASQA. Glutamate 367 is a [CaMn4O5] cluster binding site. The chain crosses the membrane as a helical span at residues 447–471; the sequence is RARAAAAGFEKGIDRDFEPVLSMTP.

It belongs to the PsbB/PsbC family. PsbC subfamily. PSII is composed of 1 copy each of membrane proteins PsbA, PsbB, PsbC, PsbD, PsbE, PsbF, PsbH, PsbI, PsbJ, PsbK, PsbL, PsbM, PsbT, PsbX, PsbY, PsbZ, Psb30/Ycf12, at least 3 peripheral proteins of the oxygen-evolving complex and a large number of cofactors. It forms dimeric complexes. The cofactor is Binds multiple chlorophylls and provides some of the ligands for the Ca-4Mn-5O cluster of the oxygen-evolving complex. It may also provide a ligand for a Cl- that is required for oxygen evolution. PSII binds additional chlorophylls, carotenoids and specific lipids..

Its subcellular location is the plastid. The protein resides in the chloroplast thylakoid membrane. Its function is as follows. One of the components of the core complex of photosystem II (PSII). It binds chlorophyll and helps catalyze the primary light-induced photochemical processes of PSII. PSII is a light-driven water:plastoquinone oxidoreductase, using light energy to abstract electrons from H(2)O, generating O(2) and a proton gradient subsequently used for ATP formation. The polypeptide is Photosystem II CP43 reaction center protein (Aethionema cordifolium (Lebanon stonecress)).